Reading from the N-terminus, the 363-residue chain is Chorismate synthase (363 aa).

Arg47 contributes to the NADP(+) binding site. FMN is bound by residues 124–126, Gly285, 300–304, and Arg326; these read RSS and KPTAT.

The protein belongs to the chorismate synthase family. As to quaternary structure, homotetramer. It depends on FMNH2 as a cofactor.

It catalyses the reaction 5-O-(1-carboxyvinyl)-3-phosphoshikimate = chorismate + phosphate. It participates in metabolic intermediate biosynthesis; chorismate biosynthesis; chorismate from D-erythrose 4-phosphate and phosphoenolpyruvate: step 7/7. Functionally, catalyzes the anti-1,4-elimination of the C-3 phosphate and the C-6 proR hydrogen from 5-enolpyruvylshikimate-3-phosphate (EPSP) to yield chorismate, which is the branch point compound that serves as the starting substrate for the three terminal pathways of aromatic amino acid biosynthesis. This reaction introduces a second double bond into the aromatic ring system. This is Chorismate synthase from Opitutus terrae (strain DSM 11246 / JCM 15787 / PB90-1).